The following is a 238-amino-acid chain: Probable xyloglucan-specific endo-beta-1,4-glucanase A (238 aa).

Residues 1-18 (MKFSLSVALSLAAATAQA) form the signal peptide. N-linked (GlcNAc...) asparagine glycosylation is found at Asn-106 and Asn-171.

Belongs to the glycosyl hydrolase 12 (cellulase H) family.

It is found in the secreted. The catalysed reaction is xyloglucan + H2O = xyloglucan oligosaccharides.. Its function is as follows. Catalyzes endohydrolysis of 1,4-beta-D-glucosidic linkages in xyloglucan with retention of the beta-configuration of the glycosyl residues. Specific for xyloglucan and does not hydrolyze other cell wall components. In Neosartorya fischeri (strain ATCC 1020 / DSM 3700 / CBS 544.65 / FGSC A1164 / JCM 1740 / NRRL 181 / WB 181) (Aspergillus fischerianus), this protein is Probable xyloglucan-specific endo-beta-1,4-glucanase A (xgeA).